We begin with the raw amino-acid sequence, 274 residues long: Large ribosomal subunit protein uL2cz/uL2cy (274 aa).

Disordered stretches follow at residues 1–21 (MAIH…VDSQ) and 225–254 (PVDH…PALG).

This sequence belongs to the universal ribosomal protein uL2 family. As to quaternary structure, part of the 50S ribosomal subunit.

The protein resides in the plastid. The protein localises to the chloroplast. This Draba nemorosa (Woodland whitlowgrass) protein is Large ribosomal subunit protein uL2cz/uL2cy (rpl2-A).